The primary structure comprises 123 residues: Small ribosomal subunit protein uS12 (123 aa).

A disordered region spans residues 1–31; that stretch reads MPTIQQLVRKGRHSKKAKVATAGLKGSPQRR. Over residues 9-18 the composition is skewed to basic residues; it reads RKGRHSKKAK. Asp-89 carries the 3-methylthioaspartic acid modification.

The protein belongs to the universal ribosomal protein uS12 family. Part of the 30S ribosomal subunit. Contacts proteins S8 and S17. May interact with IF1 in the 30S initiation complex.

In terms of biological role, with S4 and S5 plays an important role in translational accuracy. Interacts with and stabilizes bases of the 16S rRNA that are involved in tRNA selection in the A site and with the mRNA backbone. Located at the interface of the 30S and 50S subunits, it traverses the body of the 30S subunit contacting proteins on the other side and probably holding the rRNA structure together. The combined cluster of proteins S8, S12 and S17 appears to hold together the shoulder and platform of the 30S subunit. This is Small ribosomal subunit protein uS12 from Corynebacterium aurimucosum (strain ATCC 700975 / DSM 44827 / CIP 107346 / CN-1) (Corynebacterium nigricans).